The chain runs to 398 residues: Calreticulin (398 aa).

Residues 1-19 (MKAVVLVVVSLLALSSINC) form the signal peptide. Residues 20–197 (DVFFEEKFPD…NEKVESGDLE (178 aa)) form an N-domain region. The cysteines at positions 105 and 137 are disulfide-linked. Positions 109, 111, 128, and 135 each coordinate an alpha-D-glucoside. 7 consecutive repeat copies span residues 191 to 202 (VESGDLEADWDF), 210 to 221 (DPEAKKPEDWDD), 227 to 238 (DPEDKKPEDWDK), 244 to 255 (DPDATKPEDWDD), 259 to 269 (GEWEPPMIDNP), 273 to 283 (GVWAPKQIDNP), and 287 to 297 (GPWVHPEIDNP). Positions 191–255 (VESGDLEADW…DATKPEDWDD (65 aa)) are 4 X approximate repeats. Residues 198 to 308 (ADWDFLPNKK…YTPDSNLYKR (111 aa)) are P-domain. Over residues 207 to 251 (KIKDPEAKKPEDWDDKPTIPDPEDKKPEDWDKPEHIPDPDATKPE) the composition is skewed to basic and acidic residues. The disordered stretch occupies residues 207–257 (KIKDPEAKKPEDWDDKPTIPDPEDKKPEDWDKPEHIPDPDATKPEDWDDEM). The 3 X approximate repeats stretch occupies residues 259–297 (GEWEPPMIDNPDYKGVWAPKQIDNPAYKGPWVHPEIDNP). Residues 309–398 (DEICAVGLDL…AAPVEEHDEL (90 aa)) are C-domain. Position 317 (D317) interacts with an alpha-D-glucoside. Residues 334–398 (DDPAAAKERG…AAPVEEHDEL (65 aa)) form a disordered region. A compositionally biased stretch (basic and acidic residues) spans 337-372 (AAAKERGEVIKKRQEGEKKMKSEQDEAEREKEKAEK). A compositionally biased stretch (acidic residues) spans 373 to 387 (PDDEEDDEDLDDETG). A Prevents secretion from ER motif is present at residues 395–398 (HDEL).

It belongs to the calreticulin family. As to quaternary structure, monomer. In terms of tissue distribution, expressed in fat bodies. Not expressed in midgut, silk gland, ovary or testis.

The protein resides in the endoplasmic reticulum lumen. In terms of biological role, molecular calcium-binding chaperone promoting folding, oligomeric assembly and quality control in the ER via the calreticulin/calnexin cycle. This lectin may interact transiently with almost all of the monoglucosylated glycoproteins that are synthesized in the ER. This is Calreticulin from Bombyx mori (Silk moth).